The chain runs to 75 residues: Protease B inhibitor 1 (75 aa).

The residue at position 74 (Thr74) is a Phosphothreonine.

It belongs to the protease inhibitor I9 family. In terms of assembly, part of the heterodimeric LMA1 complex together with the thioredoxin II/TRX2. LMA1 binds to the ATPase SEC18.

Its subcellular location is the cytoplasm. The protein localises to the nucleus. In terms of biological role, cytosolic inhibitor of vacuolar proteinase B (yscB), probably regulating protease B activity during limited proteolysis. PBI2 is a component of the LMA1 complex, which is involved in the facilitation of vesicle fusion such as homotypic vacuole and ER-derived COPII vesicle fusion with the Golgi. The sequence is that of Protease B inhibitor 1 (PBI2) from Saccharomyces cerevisiae (Baker's yeast).